Consider the following 367-residue polypeptide: snRNA-activating protein complex subunit 1 (367 aa).

An SNAPC3-binding region spans residues 1–168 (MGTPPGLQTD…EEFKDPSDRV (168 aa)). The interval 164-268 (PSDRVMKLIT…AESLAKIKSK (105 aa)) is SNAPC4-binding. Disordered regions lie at residues 228–254 (KDRK…QETE) and 278–367 (KSRR…KRKH). A compositionally biased stretch (basic and acidic residues) spans 238 to 254 (KINDGEEKMEGNSQETE). 2 positions are modified to phosphoserine: serine 289 and serine 290. A compositionally biased stretch (polar residues) spans 292–301 (CDSASGQGQV).

Part of the SNAPc complex composed of 5 subunits: SNAPC1, SNAPC2, SNAPC3, SNAPC4 and SNAPC5. SNAPC1 interacts with SNAPC3, SNAPC4 and TBP.

The protein localises to the nucleus. Part of the SNAPc complex required for the transcription of both RNA polymerase II and III small-nuclear RNA genes. Binds to the proximal sequence element (PSE), a non-TATA-box basal promoter element common to these 2 types of genes. Recruits TBP and BRF2 to the U6 snRNA TATA box. In Macaca fascicularis (Crab-eating macaque), this protein is snRNA-activating protein complex subunit 1 (SNAPC1).